Here is a 237-residue protein sequence, read N- to C-terminus: Ribonuclease PH (237 aa).

Residues Arg86 and 124–126 (GTR) contribute to the phosphate site.

It belongs to the RNase PH family. Homohexameric ring arranged as a trimer of dimers.

It carries out the reaction tRNA(n+1) + phosphate = tRNA(n) + a ribonucleoside 5'-diphosphate. Phosphorolytic 3'-5' exoribonuclease that plays an important role in tRNA 3'-end maturation. Removes nucleotide residues following the 3'-CCA terminus of tRNAs; can also add nucleotides to the ends of RNA molecules by using nucleoside diphosphates as substrates, but this may not be physiologically important. Probably plays a role in initiation of 16S rRNA degradation (leading to ribosome degradation) during starvation. This is Ribonuclease PH from Bradyrhizobium sp. (strain ORS 278).